We begin with the raw amino-acid sequence, 57 residues long: Small ribosomal subunit protein bS21 (57 aa).

The tract at residues 35 to 57 is disordered; the sequence is RERYEKPSLRRKRKQEAARKRNR.

Belongs to the bacterial ribosomal protein bS21 family.

The polypeptide is Small ribosomal subunit protein bS21 (Thermosynechococcus vestitus (strain NIES-2133 / IAM M-273 / BP-1)).